The primary structure comprises 369 residues: Integrator complex assembly factor WDR73 (369 aa).

WD repeat units lie at residues 74-114, 266-306, and 326-366; these read FIDE…RDVI, AASE…SAMK, and GREP…VHDG.

This sequence belongs to the WD repeat WDR73 family.

It localises to the cytoplasm. It is found in the cytoskeleton. Its subcellular location is the spindle. The protein resides in the spindle pole. The protein localises to the cleavage furrow. Component of a multiprotein complex required for the assembly of the RNA endonuclease module of the integrator complex. Associates with ints9 and ints11 in the cytoplasm, stabilizing the ints9-ints11 heterodimer and blocking the active site of ints11. Brat1 then joins the complex and plugs the active site of ints11, leading to wdr73 release and nuclear import of ints9 and ints11. This Xenopus laevis (African clawed frog) protein is Integrator complex assembly factor WDR73 (wdr73).